A 227-amino-acid chain; its full sequence is Cytochrome c oxidase subunit 2 (227 aa).

Residues methionine 1 to serine 14 lie on the Mitochondrial intermembrane side of the membrane. A helical membrane pass occupies residues proline 15 to methionine 45. The Mitochondrial matrix segment spans residues leucine 46–glutamine 59. Residues glutamate 60–methionine 87 traverse the membrane as a helical segment. Residues aspartate 88–threonine 227 lie on the Mitochondrial intermembrane side of the membrane. Positions 161, 196, 198, 200, 204, and 207 each coordinate Cu cation. Glutamate 198 serves as a coordination point for Mg(2+).

It belongs to the cytochrome c oxidase subunit 2 family. As to quaternary structure, component of the cytochrome c oxidase (complex IV, CIV), a multisubunit enzyme composed of 14 subunits. The complex is composed of a catalytic core of 3 subunits MT-CO1, MT-CO2 and MT-CO3, encoded in the mitochondrial DNA, and 11 supernumerary subunits COX4I, COX5A, COX5B, COX6A, COX6B, COX6C, COX7A, COX7B, COX7C, COX8 and NDUFA4, which are encoded in the nuclear genome. The complex exists as a monomer or a dimer and forms supercomplexes (SCs) in the inner mitochondrial membrane with NADH-ubiquinone oxidoreductase (complex I, CI) and ubiquinol-cytochrome c oxidoreductase (cytochrome b-c1 complex, complex III, CIII), resulting in different assemblies (supercomplex SCI(1)III(2)IV(1) and megacomplex MCI(2)III(2)IV(2)). Found in a complex with TMEM177, COA6, COX18, COX20, SCO1 and SCO2. Interacts with TMEM177 in a COX20-dependent manner. Interacts with COX20. Interacts with COX16. The cofactor is Cu cation.

Its subcellular location is the mitochondrion inner membrane. The catalysed reaction is 4 Fe(II)-[cytochrome c] + O2 + 8 H(+)(in) = 4 Fe(III)-[cytochrome c] + 2 H2O + 4 H(+)(out). Its function is as follows. Component of the cytochrome c oxidase, the last enzyme in the mitochondrial electron transport chain which drives oxidative phosphorylation. The respiratory chain contains 3 multisubunit complexes succinate dehydrogenase (complex II, CII), ubiquinol-cytochrome c oxidoreductase (cytochrome b-c1 complex, complex III, CIII) and cytochrome c oxidase (complex IV, CIV), that cooperate to transfer electrons derived from NADH and succinate to molecular oxygen, creating an electrochemical gradient over the inner membrane that drives transmembrane transport and the ATP synthase. Cytochrome c oxidase is the component of the respiratory chain that catalyzes the reduction of oxygen to water. Electrons originating from reduced cytochrome c in the intermembrane space (IMS) are transferred via the dinuclear copper A center (CU(A)) of subunit 2 and heme A of subunit 1 to the active site in subunit 1, a binuclear center (BNC) formed by heme A3 and copper B (CU(B)). The BNC reduces molecular oxygen to 2 water molecules using 4 electrons from cytochrome c in the IMS and 4 protons from the mitochondrial matrix. This Taterillus emini (Emin's gerbil) protein is Cytochrome c oxidase subunit 2 (MT-CO2).